Here is a 137-residue protein sequence, read N- to C-terminus: Histone H2B.1, sperm (137 aa).

Residues 1–43 (MPSQKSPTKRSPTKRSPQKGGKGAKRGGKAGKRRRGVAVKRRR) form a disordered region. Short sequence motifs (SPKK motif) lie at residues 6-9 (SPTK), 11-14 (SPTK), and 16-19 (SPQK). Basic residues predominate over residues 7 to 43 (PTKRSPTKRSPQKGGKGAKRGGKAGKRRRGVAVKRRR). Residues S11 and S16 each carry the phosphoserine modification. S124 carries O-linked (GlcNAc) serine glycosylation. K132 participates in a covalent cross-link: Glycyl lysine isopeptide (Lys-Gly) (interchain with G-Cter in ubiquitin).

The protein belongs to the histone H2B family. The nucleosome is a histone octamer containing two molecules each of H2A, H2B, H3 and H4 assembled in one H3-H4 heterotetramer and two H2A-H2B heterodimers. The octamer wraps approximately 147 bp of DNA. Post-translationally, monoubiquitination of Lys-132 gives a specific tag for epigenetic transcriptional activation and is also prerequisite for histone H3 'Lys-4' and 'Lys-79' methylation. In terms of processing, phosphorylated on SPKK motifs 2 and 3; which may regulate DNA binding. Dephosphorylated during maturation of spermatids to mature sperm and rephosphorylated at fertilization. GlcNAcylation at Ser-124 promotes monoubiquitination of Lys-132. It fluctuates in response to extracellular glucose, and associates with transcribed genes.

The protein localises to the nucleus. It localises to the chromosome. Core component of nucleosome. Nucleosomes wrap and compact DNA into chromatin, limiting DNA accessibility to the cellular machineries which require DNA as a template. Histones thereby play a central role in transcription regulation, DNA repair, DNA replication and chromosomal stability. DNA accessibility is regulated via a complex set of post-translational modifications of histones, also called histone code, and nucleosome remodeling. This chain is Histone H2B.1, sperm, found in Psammechinus miliaris (Green sea urchin).